We begin with the raw amino-acid sequence, 82 residues long: Large ribosomal subunit protein bL31 (82 aa).

The protein belongs to the bacterial ribosomal protein bL31 family. Type A subfamily. In terms of assembly, part of the 50S ribosomal subunit.

Binds the 23S rRNA. In Rippkaea orientalis (strain PCC 8801 / RF-1) (Cyanothece sp. (strain PCC 8801)), this protein is Large ribosomal subunit protein bL31.